The primary structure comprises 539 residues: Chaperonin GroEL (539 aa).

Residues 29–32 (TIGP), 86–90 (DGTTT), G413, 476–478 (NAA), and D492 contribute to the ATP site.

The protein belongs to the chaperonin (HSP60) family. As to quaternary structure, forms a cylinder of 14 subunits composed of two heptameric rings stacked back-to-back. Interacts with the co-chaperonin GroES.

The protein resides in the cytoplasm. The catalysed reaction is ATP + H2O + a folded polypeptide = ADP + phosphate + an unfolded polypeptide.. Together with its co-chaperonin GroES, plays an essential role in assisting protein folding. The GroEL-GroES system forms a nano-cage that allows encapsulation of the non-native substrate proteins and provides a physical environment optimized to promote and accelerate protein folding. The polypeptide is Chaperonin GroEL (Staphylococcus epidermidis (strain ATCC 12228 / FDA PCI 1200)).